The chain runs to 481 residues: Glutamyl-tRNA(Gln) amidotransferase subunit A (481 aa).

Active-site charge relay system residues include lysine 76 and serine 151. Serine 175 serves as the catalytic Acyl-ester intermediate.

The protein belongs to the amidase family. GatA subfamily. Heterotrimer of A, B and C subunits.

The catalysed reaction is L-glutamyl-tRNA(Gln) + L-glutamine + ATP + H2O = L-glutaminyl-tRNA(Gln) + L-glutamate + ADP + phosphate + H(+). Functionally, allows the formation of correctly charged Gln-tRNA(Gln) through the transamidation of misacylated Glu-tRNA(Gln) in organisms which lack glutaminyl-tRNA synthetase. The reaction takes place in the presence of glutamine and ATP through an activated gamma-phospho-Glu-tRNA(Gln). In Neisseria gonorrhoeae (strain ATCC 700825 / FA 1090), this protein is Glutamyl-tRNA(Gln) amidotransferase subunit A.